The following is a 329-amino-acid chain: Serpentine receptor class alpha-3 (329 aa).

A run of 7 helical transmembrane segments spans residues 25-45, 57-77, 104-124, 144-164, 187-207, 238-258, and 273-293; these read LIYFVLIITTLFFTFFALKVI, ILLYQNLFSANIHQIFLGITI, YLEMFIAGLSGMVYGQTGLLF, GIITSIIVLLLSGSTARIIIW, TMFFSICTFISLFNLVISLLI, ICFLTFFQFIFMFIYSFGVFL, and FWVVWVYTIPFIAASFPILLI.

It belongs to the nematode receptor-like protein sra family.

The protein resides in the membrane. This Caenorhabditis elegans protein is Serpentine receptor class alpha-3 (sra-3).